The following is a 537-amino-acid chain: Pheophorbide a oxygenase, chloroplastic (537 aa).

The transit peptide at 1–49 directs the protein to the chloroplast; sequence MSVVLLSSTSATITKSQSKKIPFLSPTTKFPLKVSISPSRSKLFHNPLR. The interval 51-77 is disordered; the sequence is AAPPSVPTSDSTEEKRIEEEYGGDKEE. Positions 62–77 are enriched in basic and acidic residues; sequence TEEKRIEEEYGGDKEE. Residues 88–200 form the Rieske domain; sequence WYPVSLVEDL…TMVSQGLLFV (113 aa). [2Fe-2S] cluster is bound by residues cysteine 130, histidine 132, cysteine 150, and histidine 153.

Interacts with HCAR, SGR1, RCCR, PPH and the LHCII complex. Part of a SGR1-CCE-LHCII complex, which acts in chlorophyll breakdown.

The protein localises to the plastid. It is found in the chloroplast thylakoid membrane. The enzyme catalyses pheophorbide a + 2 reduced [2Fe-2S]-[ferredoxin] + O2 + 2 H(+) = red chlorophyll catabolite + 2 oxidized [2Fe-2S]-[ferredoxin]. It participates in porphyrin-containing compound metabolism; chlorophyll degradation. Its activity is regulated as follows. Might be regulated by a phosphorylation/dephosphorylation mechanism. In terms of biological role, catalyzes the key reaction of chlorophyll catabolism, porphyrin macrocycle cleavage of pheophorbide a (pheide a) to a primary fluorescent catabolite (pFCC). Works in a two-step reaction with red chlorophyll catabolite reductase (RCCR). Creates the intermediate RCC through the opening of the porphyrin macrocycle by the introduction of one atom of molecular oxygen at the alpha-methine bridge. Seems to be specific for pheide a. Belongs to the chlorophyll catabolic enzymes (CCEs). This is Pheophorbide a oxygenase, chloroplastic (PAO) from Arabidopsis thaliana (Mouse-ear cress).